The sequence spans 72 residues: Conotoxin Gla(2)-TxVI/B (72 aa).

The signal sequence occupies residues 1 to 19; it reads MEKLIILLLVAAVLMSTQA. The propeptide occupies 20 to 44; the sequence is LFQEKRTMKKIDFLSKGKADAEKQR. Disulfide bonds link Cys48–Cys62, Cys55–Cys66, and Cys61–Cys70. Position 56 is a 4-carboxyglutamate (Glu56). Position 58 is a 4-hydroxyproline (Pro58). Ser71 is subject to Serine amide.

In terms of processing, brominated at one of the Trp residues. As to expression, expressed by the venom duct.

The protein resides in the secreted. In Conus textile (Cloth-of-gold cone), this protein is Conotoxin Gla(2)-TxVI/B.